Here is a 336-residue protein sequence, read N- to C-terminus: Cytoskeleton protein RodZ (336 aa).

At 1–111 (MNTEATHDQN…LGKRRKKRDG (111 aa)) the chain is on the cytoplasmic side. The 53-residue stretch at 19–71 (LRNAREQLGLSQQAVAERLCLKVSTVRDIEEDKAPSDLASTFLRGYIRSYARL) folds into the HTH cro/C1-type domain. A DNA-binding region (H-T-H motif) is located at residues 30–49 (QQAVAERLCLKVSTVRDIEE). The helical; Signal-anchor for type II membrane protein transmembrane segment at 112–132 (WLMSFTWLVLFVVVGLTGAWW) threads the bilayer. The Periplasmic portion of the chain corresponds to 133-336 (WQNHKAQQEE…TLNAEPTPAQ (204 aa)). The segment at 155 to 243 (NADKDSGQSV…PSALPTSQAG (89 aa)) is disordered. Residues 161 to 175 (GQSVPLDTGAVTSQD) are compositionally biased toward polar residues. Low complexity-rich tracts occupy residues 176-214 (TTPA…VVAP) and 221-243 (TAAT…SQAG).

This sequence belongs to the RodZ family.

Its subcellular location is the cell inner membrane. Its function is as follows. Cytoskeletal protein that is involved in cell-shape control through regulation of the length of the long axis. The chain is Cytoskeleton protein RodZ from Salmonella newport (strain SL254).